Reading from the N-terminus, the 260-residue chain is Dehydrogenase/reductase SDR family member 11 (260 aa).

Positions 1–30 (MTRAGMERWRDRLALVTGASGGIGAAVARA) are cleaved as a signal peptide. NADP(+) is bound by residues 18–23 (GASGGI), 43–44 (RT), Glu49, 70–71 (DL), and Asn97. Positions 151 and 166 each coordinate substrate. Residues Tyr166, Lys170, 201–204 (VETQ), and Lys208 each bind NADP(+). Tyr166 serves as the catalytic Proton acceptor.

The protein belongs to the short-chain dehydrogenases/reductases (SDR) family. Homotetramer.

It is found in the secreted. The catalysed reaction is a 3beta-hydroxysteroid + NADP(+) = a 3-oxosteroid + NADPH + H(+). It catalyses the reaction 17beta-estradiol + NAD(+) = estrone + NADH + H(+). It carries out the reaction 17beta-estradiol + NADP(+) = estrone + NADPH + H(+). It functions in the pathway steroid biosynthesis; estrogen biosynthesis. With respect to regulation, inhibited by flavonoids including apigenin, luteolin, genistein, kaempferol and quercetin and also by carbenoxolone, zearalenone, glycyrrhetinic, curcumin and flufenamic acid. Functionally, catalyzes the conversion of the 17-keto group of estrone, 4- and 5-androstenes and 5-alpha-androstanes into their 17-beta-hydroxyl metabolites and the conversion of the 3-keto group of 3-, 3,17- and 3,20- diketosteroids into their 3-hydroxyl metabolites. Exhibits reductive 3-beta-hydroxysteroid dehydrogenase activity toward 5-beta-androstanes, 5-beta-pregnanes, 4-pregnenes and bile acids. May also reduce endogenous and exogenous alpha-dicarbonyl compounds and xenobiotic alicyclic ketones. In Mus musculus (Mouse), this protein is Dehydrogenase/reductase SDR family member 11 (Dhrs11).